The sequence spans 1357 residues: DNA-directed RNA polymerase subunit beta (1357 aa).

Belongs to the RNA polymerase beta chain family. As to quaternary structure, the RNAP catalytic core consists of 2 alpha, 1 beta, 1 beta' and 1 omega subunit. When a sigma factor is associated with the core the holoenzyme is formed, which can initiate transcription.

It catalyses the reaction RNA(n) + a ribonucleoside 5'-triphosphate = RNA(n+1) + diphosphate. In terms of biological role, DNA-dependent RNA polymerase catalyzes the transcription of DNA into RNA using the four ribonucleoside triphosphates as substrates. This chain is DNA-directed RNA polymerase subunit beta, found in Pseudomonas syringae pv. syringae (strain B728a).